A 67-amino-acid polypeptide reads, in one-letter code: Preprofallaxidin-1 (67 aa).

Residues 1-22 (MASLKKSLFLVLFLGMVSLSIC) form the signal peptide. Residues 23–46 (DKEKREGENEEEEEEHEEESEEKR) constitute a propeptide that is removed on maturation. The interval 24-46 (KEKREGENEEEEEEHEEESEEKR) is disordered. The span at 30 to 42 (ENEEEEEEHEEES) shows a compositional bias: acidic residues.

As to expression, expressed by the skin glands.

The protein localises to the secreted. In terms of biological role, fallaxidin-4.1 shows antibacterial activity against the Gram-positive bacteria L.lactis (MIC=12 uM), M.luteus (MIC=100 uM), S.epidermidis (MIC=100 uM) and S.uberis (MIC=50 uM). No antibacterial activity against the Gram-positive bacteria B.cereus, E.faecalis, L.innocua, S.aureus, or the Gram-negative bacteria E.cloacae and E.coli. Inhibits the formation of NO by neuronal nitric oxide synthase with an IC(50) of 13.3 uM. The sequence is that of Preprofallaxidin-1 from Litoria fallax (Eastern dwarf tree frog).